The chain runs to 610 residues: Elongation factor 4 (610 aa).

The 185-residue stretch at 14-198 folds into the tr-type G domain; sequence ANIRNFSIVA…AIVTRLPPPQ (185 aa). GTP is bound by residues 26 to 31 and 145 to 148; these read DHGKST and NKVD.

This sequence belongs to the TRAFAC class translation factor GTPase superfamily. Classic translation factor GTPase family. LepA subfamily.

It is found in the cell inner membrane. It catalyses the reaction GTP + H2O = GDP + phosphate + H(+). In terms of biological role, required for accurate and efficient protein synthesis under certain stress conditions. May act as a fidelity factor of the translation reaction, by catalyzing a one-codon backward translocation of tRNAs on improperly translocated ribosomes. Back-translocation proceeds from a post-translocation (POST) complex to a pre-translocation (PRE) complex, thus giving elongation factor G a second chance to translocate the tRNAs correctly. Binds to ribosomes in a GTP-dependent manner. This is Elongation factor 4 from Nitrobacter hamburgensis (strain DSM 10229 / NCIMB 13809 / X14).